The chain runs to 314 residues: Replication initiation protein (314 aa).

Residues 1 to 18 (MSKKAEEIQAKQSLEKEN) show a composition bias toward basic and acidic residues. Residues 1-25 (MSKKAEEIQAKQSLEKENSNFSKTG) form a disordered region.

The protein belongs to the plasmid replication initiation factor family.

This protein is probably a specific topoisomerase involved in initiating replication. This protein is specifically required and may be rate-limiting for replication of the plasmid in vivo. The protein is Replication initiation protein (repE) of Staphylococcus aureus.